Here is a 230-residue protein sequence, read N- to C-terminus: 5'-methylthioadenosine/S-adenosylhomocysteine nucleosidase (230 aa).

The Proton acceptor role is filled by Glu12. Substrate contacts are provided by residues Gly78, Val152, and 173–174 (ME). Asp197 (proton donor) is an active-site residue.

This sequence belongs to the PNP/UDP phosphorylase family. MtnN subfamily.

It catalyses the reaction S-adenosyl-L-homocysteine + H2O = S-(5-deoxy-D-ribos-5-yl)-L-homocysteine + adenine. It carries out the reaction S-methyl-5'-thioadenosine + H2O = 5-(methylsulfanyl)-D-ribose + adenine. The enzyme catalyses 5'-deoxyadenosine + H2O = 5-deoxy-D-ribose + adenine. Its pathway is amino-acid biosynthesis; L-methionine biosynthesis via salvage pathway; S-methyl-5-thio-alpha-D-ribose 1-phosphate from S-methyl-5'-thioadenosine (hydrolase route): step 1/2. Functionally, catalyzes the irreversible cleavage of the glycosidic bond in both 5'-methylthioadenosine (MTA) and S-adenosylhomocysteine (SAH/AdoHcy) to adenine and the corresponding thioribose, 5'-methylthioribose and S-ribosylhomocysteine, respectively. Also cleaves 5'-deoxyadenosine, a toxic by-product of radical S-adenosylmethionine (SAM) enzymes, into 5-deoxyribose and adenine. The protein is 5'-methylthioadenosine/S-adenosylhomocysteine nucleosidase of Glaesserella parasuis serovar 5 (strain SH0165) (Haemophilus parasuis).